A 695-amino-acid polypeptide reads, in one-letter code: MALLLVALLAFLSLGSGCHHRLCHCSNGVFLCQESKVTEIPSDLPRDAVELRFVLTKLRVIPKGAFSGFGDLEKIEISQNDVLEVIEANVFSNLPKLHEIRIEKANNLLYIDPDAFQNLPNLRYLLISNTGIKHLPAVHKIQSLQKVLLDIQDNINIHTVERNSFMGLSFESMTVWLSKNGIQEIHNCAFNGTQLDELNLSDNSNLEELPNDVFQGASGPVILDISRTRIRSLPSYGLENLKKLRAKSTYRLKKLPSLEKFVTLVEASLTYPSHCCAFANWRRQTSDLHPICNKSILRQEVDDMTQARGQRVSLAEDDEPSYAKGFDVMYSEFDYDLCNEVVDVTCSPEPDAFNPCEDIMGDDILRVLIWFISILAITGNILVLVILITSQYKLTVPRFLMCNLAFADLCIGIYLLLIASVDVHTKTEYHNYAIDWQTGAGCDAAGFFTVFASELSVYTLTAITLERWHTITHAMQLECKVQLRHAASIMLVGWIFAFAVALFPIFGISSYMKVSICLPMDIDSPLSQLYVMSLLVLNVLAFVVICGCYTHIYLTVRNPNITSSSSDTKIAKRMAMLIFTDFLCMAPISFFAISASLKVPLITVSKSKILLVLFYPINSCANPFLYAIFTKNFRRDFFILLSKFGCYEVQAQTYRSETSSTAHNFHPRNGHCPPAPRVTNGSNYTLIPLRHLAKN.

The signal sequence occupies residues 1–17 (MALLLVALLAFLSLGSG). Disulfide bonds link C18–C25 and C23–C32. Residues 18-46 (CHHRLCHCSNGVFLCQESKVTEIPSDLPR) enclose the LRRNT domain. Over 18 to 366 (CHHRLCHCSN…EDIMGDDILR (349 aa)) the chain is Extracellular. LRR repeat units follow at residues 49–72 (VELR…FGDL), 73–97 (EKIE…LPKL), 98–118 (HEIR…AFQN), 119–143 (LPNL…KIQS), 144–169 (LQKV…MGLS), 170–192 (FESM…AFNG), 193–216 (TQLD…VFQG), 217–240 (ASGP…GLEN), and 241–259 (LKKL…PSLE). N-linked (GlcNAc...) asparagine glycosylation is found at N191 and N199. Disulfide bonds link C275-C346, C276-C292, C276-C356, and C292-C338. N-linked (GlcNAc...) asparagine glycosylation occurs at N293. Y335 carries the post-translational modification Sulfotyrosine. The chain crosses the membrane as a helical span at residues 367–387 (VLIWFISILAITGNILVLVIL). Topologically, residues 388–398 (ITSQYKLTVPR) are cytoplasmic. The helical transmembrane segment at 399 to 421 (FLMCNLAFADLCIGIYLLLIASV) threads the bilayer. Residues 422-443 (DVHTKTEYHNYAIDWQTGAGCD) are Extracellular-facing. C442 and C517 are oxidised to a cystine. Residues 444 to 465 (AAGFFTVFASELSVYTLTAITL) form a helical membrane-spanning segment. Residues 466-485 (ERWHTITHAMQLECKVQLRH) lie on the Cytoplasmic side of the membrane. The chain crosses the membrane as a helical span at residues 486-508 (AASIMLVGWIFAFAVALFPIFGI). The Extracellular segment spans residues 509 to 528 (SSYMKVSICLPMDIDSPLSQ). The chain crosses the membrane as a helical span at residues 529 to 550 (LYVMSLLVLNVLAFVVICGCYT). The Cytoplasmic segment spans residues 551–573 (HIYLTVRNPNITSSSSDTKIAKR). Residues 574 to 597 (MAMLIFTDFLCMAPISFFAISASL) traverse the membrane as a helical segment. Topologically, residues 598–608 (KVPLITVSKSK) are extracellular. A helical transmembrane segment spans residues 609-630 (ILLVLFYPINSCANPFLYAIFT). The Cytoplasmic portion of the chain corresponds to 631–695 (KNFRRDFFIL…LIPLRHLAKN (65 aa)).

This sequence belongs to the G-protein coupled receptor 1 family. FSH/LSH/TSH subfamily. Homotrimer. Functions as a homotrimer binding the FSH hormone heterodimer composed of CGA and FSHB. Interacts with ARRB2. Interacts with APPL2; interaction is independent of follicle stimulating hormone stimulation. Post-translationally, N-glycosylated; indirectly required for FSH-binding, possibly via a conformational change that allows high affinity binding of hormone. In terms of processing, sulfated.

It localises to the cell membrane. Functionally, g protein-coupled receptor for follitropin, the follicle-stimulating hormone. Through cAMP production activates the downstream PI3K-AKT and ERK1/ERK2 signaling pathways. The polypeptide is Follicle-stimulating hormone receptor (FSHR) (Bos taurus (Bovine)).